A 122-amino-acid chain; its full sequence is Large ribosomal subunit protein uL14 (122 aa).

It belongs to the universal ribosomal protein uL14 family. In terms of assembly, part of the 50S ribosomal subunit. Forms a cluster with proteins L3 and L19. In the 70S ribosome, L14 and L19 interact and together make contacts with the 16S rRNA in bridges B5 and B8.

In terms of biological role, binds to 23S rRNA. Forms part of two intersubunit bridges in the 70S ribosome. The chain is Large ribosomal subunit protein uL14 from Frankia alni (strain DSM 45986 / CECT 9034 / ACN14a).